Reading from the N-terminus, the 134-residue chain is Histone H2B (134 aa).

Over residues 1-10 (MSDKASTPKK) the composition is skewed to polar residues. Disordered regions lie at residues 1-29 (MSDK…EAKK) and 113-134 (VSEG…SKSR). Residues 12–29 (ATKDATKPKKVGDEEAKK) are compositionally biased toward basic and acidic residues. A compositionally biased stretch (polar residues) spans 125 to 134 (GQPTSGSKSR).

Belongs to the histone H2B family. In terms of assembly, the nucleosome is a histone octamer containing two molecules each of H2A, H2B, H3 and H4 assembled in one H3-H4 heterotetramer and two H2A-H2B heterodimers. The octamer wraps approximately 147 bp of DNA.

Its subcellular location is the nucleus. The protein resides in the chromosome. Functionally, core component of nucleosome. Nucleosomes wrap and compact DNA into chromatin, limiting DNA accessibility to the cellular machineries which require DNA as a template. Histones thereby play a central role in transcription regulation, DNA repair, DNA replication and chromosomal stability. DNA accessibility is regulated via a complex set of post-translational modifications of histones, also called histone code, and nucleosome remodeling. This Entamoeba invadens protein is Histone H2B.